The sequence spans 77 residues: NAD(P)H-quinone oxidoreductase subunit L (77 aa).

2 helical membrane passes run 12–32 (LVAY…ILFY) and 47–67 (LIVY…SPFL).

It belongs to the complex I NdhL subunit family. In terms of assembly, NDH-1 can be composed of about 15 different subunits; different subcomplexes with different compositions have been identified which probably have different functions.

Its subcellular location is the cellular thylakoid membrane. The enzyme catalyses a plastoquinone + NADH + (n+1) H(+)(in) = a plastoquinol + NAD(+) + n H(+)(out). It catalyses the reaction a plastoquinone + NADPH + (n+1) H(+)(in) = a plastoquinol + NADP(+) + n H(+)(out). Its function is as follows. NDH-1 shuttles electrons from an unknown electron donor, via FMN and iron-sulfur (Fe-S) centers, to quinones in the respiratory and/or the photosynthetic chain. The immediate electron acceptor for the enzyme in this species is believed to be plastoquinone. Couples the redox reaction to proton translocation, and thus conserves the redox energy in a proton gradient. Cyanobacterial NDH-1 also plays a role in inorganic carbon-concentration. In Prochlorococcus marinus subsp. pastoris (strain CCMP1986 / NIES-2087 / MED4), this protein is NAD(P)H-quinone oxidoreductase subunit L.